A 391-amino-acid chain; its full sequence is Trehalose-phosphate phosphatase (391 aa).

Aspartate 147 (nucleophile) is an active-site residue. Residues aspartate 147, aspartate 149, and aspartate 330 each coordinate Mg(2+). 147-149 (DFD) is a substrate binding site.

This sequence belongs to the trehalose phosphatase family. Mg(2+) is required as a cofactor.

The enzyme catalyses alpha,alpha-trehalose 6-phosphate + H2O = alpha,alpha-trehalose + phosphate. The protein operates within glycan biosynthesis; trehalose biosynthesis. Its function is as follows. Removes the phosphate from trehalose 6-phosphate to produce free trehalose. This Mycobacterium avium (strain 104) protein is Trehalose-phosphate phosphatase (otsB).